The primary structure comprises 432 residues: D-amino acid dehydrogenase (432 aa).

3–17 (VVILGSGVVGVASAW) lines the FAD pocket.

The protein belongs to the DadA oxidoreductase family. FAD serves as cofactor.

The catalysed reaction is a D-alpha-amino acid + A + H2O = a 2-oxocarboxylate + AH2 + NH4(+). Its pathway is amino-acid degradation; D-alanine degradation; NH(3) and pyruvate from D-alanine: step 1/1. Its function is as follows. Oxidative deamination of D-amino acids. This is D-amino acid dehydrogenase from Klebsiella pneumoniae (strain 342).